The primary structure comprises 428 residues: MSKIANVIGFEVMDSRGNPTVMAEVVLESGVVGTACAPSGASTGSREALELRDGDKSRYLGKGVLKAVANINETIKPLLVGKDVAAQRELDDIMLKADGTENKANLGANAILAVSLAAAKAAAQDKGIPLYAHIADINGTPGKYTMPVPMMNIINGGEHADNNVDIQEFMIQPVSAPNFTEALRMGAEVFHSLKKVLAGRGLNTAVGDEGGFAPNLPSNEAALEAIAEAVAAAGYKLGEEITLALDCASSEFYKDGVYDMSGEGKKFSPEEFADYLAELASKYPILSIEDGMDESDWDGWKVLTEKIGSTCQLVGDDLFVTNTKILKEGIDKSIANSILIKFNQIGSLSETLDAIKMAQEAGYTAVISHRSGETEDTTIADLAVATAAGQIKTGSLSRSDRVAKYNRLLRIEAELGEKAPYRGRAEFK.

(2R)-2-phosphoglycerate is bound at residue Q167. E209 functions as the Proton donor in the catalytic mechanism. The Mg(2+) site is built by D246, E289, and D316. (2R)-2-phosphoglycerate is bound by residues K341, R370, S371, and K392. Residue K341 is the Proton acceptor of the active site.

Belongs to the enolase family. In terms of assembly, component of the RNA degradosome, a multiprotein complex involved in RNA processing and mRNA degradation. Mg(2+) serves as cofactor.

It localises to the cytoplasm. The protein localises to the secreted. The protein resides in the cell surface. The enzyme catalyses (2R)-2-phosphoglycerate = phosphoenolpyruvate + H2O. It participates in carbohydrate degradation; glycolysis; pyruvate from D-glyceraldehyde 3-phosphate: step 4/5. Its function is as follows. Catalyzes the reversible conversion of 2-phosphoglycerate (2-PG) into phosphoenolpyruvate (PEP). It is essential for the degradation of carbohydrates via glycolysis. This chain is Enolase, found in Saccharophagus degradans (strain 2-40 / ATCC 43961 / DSM 17024).